The chain runs to 258 residues: 5'-nucleotidase SurE (258 aa).

Aspartate 8, aspartate 9, serine 40, and asparagine 92 together coordinate a divalent metal cation.

The protein belongs to the SurE nucleotidase family. Requires a divalent metal cation as cofactor.

The protein localises to the cytoplasm. It catalyses the reaction a ribonucleoside 5'-phosphate + H2O = a ribonucleoside + phosphate. In terms of biological role, nucleotidase that shows phosphatase activity on nucleoside 5'-monophosphates. The protein is 5'-nucleotidase SurE of Brucella anthropi (strain ATCC 49188 / DSM 6882 / CCUG 24695 / JCM 21032 / LMG 3331 / NBRC 15819 / NCTC 12168 / Alc 37) (Ochrobactrum anthropi).